Here is a 203-residue protein sequence, read N- to C-terminus: Superoxide dismutase [Mn] (203 aa).

Mn(2+) contacts are provided by His27, His81, Asp164, and His168.

This sequence belongs to the iron/manganese superoxide dismutase family. It depends on Mn(2+) as a cofactor.

The catalysed reaction is 2 superoxide + 2 H(+) = H2O2 + O2. Its function is as follows. Destroys superoxide anion radicals which are normally produced within the cells and which are toxic to biological systems. In Xanthomonas campestris pv. campestris (strain 8004), this protein is Superoxide dismutase [Mn] (sodA).